Consider the following 306-residue polypeptide: Aspartate carbamoyltransferase catalytic subunit (306 aa).

Carbamoyl phosphate-binding residues include arginine 56 and threonine 57. Residue lysine 84 participates in L-aspartate binding. Residues arginine 106, histidine 134, and glutamine 137 each coordinate carbamoyl phosphate. Residues arginine 167 and arginine 221 each coordinate L-aspartate. Carbamoyl phosphate is bound by residues glycine 262 and proline 263.

It belongs to the aspartate/ornithine carbamoyltransferase superfamily. ATCase family. In terms of assembly, heterododecamer (2C3:3R2) of six catalytic PyrB chains organized as two trimers (C3), and six regulatory PyrI chains organized as three dimers (R2).

The catalysed reaction is carbamoyl phosphate + L-aspartate = N-carbamoyl-L-aspartate + phosphate + H(+). It functions in the pathway pyrimidine metabolism; UMP biosynthesis via de novo pathway; (S)-dihydroorotate from bicarbonate: step 2/3. Functionally, catalyzes the condensation of carbamoyl phosphate and aspartate to form carbamoyl aspartate and inorganic phosphate, the committed step in the de novo pyrimidine nucleotide biosynthesis pathway. The protein is Aspartate carbamoyltransferase catalytic subunit of Desulforudis audaxviator (strain MP104C).